The primary structure comprises 222 residues: Type II restriction enzyme MjaI (222 aa).

The enzyme catalyses Endonucleolytic cleavage of DNA to give specific double-stranded fragments with terminal 5'-phosphates.. Its function is as follows. A P subtype restriction enzyme that recognizes the double-stranded sequence 5'-CTAG-3'; the cleavage site is unknown. The protein is Type II restriction enzyme MjaI (mjaIR) of Methanocaldococcus jannaschii (strain ATCC 43067 / DSM 2661 / JAL-1 / JCM 10045 / NBRC 100440) (Methanococcus jannaschii).